The chain runs to 313 residues: Ribosomal RNA small subunit methyltransferase H (313 aa).

S-adenosyl-L-methionine-binding positions include 35 to 37 (GGH), Asp-55, Phe-80, Asp-102, and Gln-109.

It belongs to the methyltransferase superfamily. RsmH family.

It is found in the cytoplasm. It carries out the reaction cytidine(1402) in 16S rRNA + S-adenosyl-L-methionine = N(4)-methylcytidine(1402) in 16S rRNA + S-adenosyl-L-homocysteine + H(+). Its function is as follows. Specifically methylates the N4 position of cytidine in position 1402 (C1402) of 16S rRNA. This is Ribosomal RNA small subunit methyltransferase H from Shewanella violacea (strain JCM 10179 / CIP 106290 / LMG 19151 / DSS12).